A 334-amino-acid chain; its full sequence is Trans-O-hydroxybenzylidenepyruvate hydratase-aldolase (334 aa).

Belongs to the DapA family.

It catalyses the reaction (3E)-4-(2-hydroxyphenyl)-2-oxobut-3-enoate + H2O = salicylaldehyde + pyruvate. It participates in aromatic compound metabolism; naphthalene degradation. Functionally, involved in the naphthalene upper catabolic pathway. Catalyzes the transformation of trans-O-hydroxybenzylidenepyruvate (THBPA) to salicylaldehyde and pyruvate. The reaction is reversible. In Pseudomonas aeruginosa, this protein is Trans-O-hydroxybenzylidenepyruvate hydratase-aldolase (pahE).